The following is a 214-amino-acid chain: Adenylate kinase (214 aa).

ATP is bound at residue Gly10–Thr15. The segment at Ser30–Val59 is NMP. AMP-binding positions include Thr31, Arg36, Lys57–Val59, Gly85–Arg88, and Gln92. The tract at residues Gly122 to Asp159 is LID. ATP contacts are provided by residues Arg123 and Val132 to Tyr133. Residues Arg156 and Arg167 each coordinate AMP. ATP is bound at residue Arg200.

The protein belongs to the adenylate kinase family. In terms of assembly, monomer.

Its subcellular location is the cytoplasm. It catalyses the reaction AMP + ATP = 2 ADP. It participates in purine metabolism; AMP biosynthesis via salvage pathway; AMP from ADP: step 1/1. Functionally, catalyzes the reversible transfer of the terminal phosphate group between ATP and AMP. Plays an important role in cellular energy homeostasis and in adenine nucleotide metabolism. The polypeptide is Adenylate kinase (Erwinia tasmaniensis (strain DSM 17950 / CFBP 7177 / CIP 109463 / NCPPB 4357 / Et1/99)).